A 352-amino-acid polypeptide reads, in one-letter code: Phosphate acyltransferase (352 aa).

The protein belongs to the PlsX family. As to quaternary structure, homodimer. Probably interacts with PlsY.

It is found in the cytoplasm. The catalysed reaction is a fatty acyl-[ACP] + phosphate = an acyl phosphate + holo-[ACP]. Its pathway is lipid metabolism; phospholipid metabolism. Catalyzes the reversible formation of acyl-phosphate (acyl-PO(4)) from acyl-[acyl-carrier-protein] (acyl-ACP). This enzyme utilizes acyl-ACP as fatty acyl donor, but not acyl-CoA. The polypeptide is Phosphate acyltransferase (Bordetella bronchiseptica (strain ATCC BAA-588 / NCTC 13252 / RB50) (Alcaligenes bronchisepticus)).